The primary structure comprises 215 residues: Cytochrome b6 (215 aa).

A helical transmembrane segment spans residues 32 to 52 (IFYCFGGIVFTCFLVQVATGF). Position 35 (Cys35) interacts with heme c. His86 and His100 together coordinate heme b. A run of 3 helical transmembrane segments spans residues 90–110 (ASMM…TGGF), 116–136 (LTWV…VTGY), and 186–206 (AHTF…FLMI). His187 and His202 together coordinate heme b.

Belongs to the cytochrome b family. PetB subfamily. In terms of assembly, the 4 large subunits of the cytochrome b6-f complex are cytochrome b6, subunit IV (17 kDa polypeptide, PetD), cytochrome f and the Rieske protein, while the 4 small subunits are PetG, PetL, PetM and PetN. The complex functions as a dimer. Heme b serves as cofactor. Requires heme c as cofactor.

Its subcellular location is the plastid. The protein resides in the chloroplast thylakoid membrane. Component of the cytochrome b6-f complex, which mediates electron transfer between photosystem II (PSII) and photosystem I (PSI), cyclic electron flow around PSI, and state transitions. This chain is Cytochrome b6, found in Skeletonema costatum (Marine centric diatom).